The sequence spans 106 residues: UPF0213 protein VPA1222 (106 aa).

Residues 7 to 82 enclose the GIY-YIG domain; it reads QHWSVYLIRN…KQLTKSKKEQ (76 aa).

The protein belongs to the UPF0213 family.

The chain is UPF0213 protein VPA1222 from Vibrio parahaemolyticus serotype O3:K6 (strain RIMD 2210633).